Consider the following 175-residue polypeptide: Type II restriction enzyme NgoBV (175 aa).

The catalysed reaction is Endonucleolytic cleavage of DNA to give specific double-stranded fragments with terminal 5'-phosphates.. A P subtype restriction enzyme that recognizes the double-stranded sequence 5'-GGNNCC-3'; the cleavage site is unknown. The polypeptide is Type II restriction enzyme NgoBV (ngoBVR) (Neisseria gonorrhoeae).